We begin with the raw amino-acid sequence, 283 residues long: Acetylglutamate kinase (283 aa).

Residues Gly-64–Gly-65, Arg-86, and Asn-178 contribute to the substrate site.

This sequence belongs to the acetylglutamate kinase family. ArgB subfamily.

The protein resides in the cytoplasm. It carries out the reaction N-acetyl-L-glutamate + ATP = N-acetyl-L-glutamyl 5-phosphate + ADP. The protein operates within amino-acid biosynthesis; L-arginine biosynthesis; N(2)-acetyl-L-ornithine from L-glutamate: step 2/4. In terms of biological role, catalyzes the ATP-dependent phosphorylation of N-acetyl-L-glutamate. The polypeptide is Acetylglutamate kinase (Lactococcus lactis subsp. cremoris (strain SK11)).